Consider the following 3583-residue polypeptide: Surfactin synthase subunit 2 (3583 aa).

3 Carrier domains span residues Ala965 to Glu1039, Ala2005 to Ala2080, and Ala3034 to Glu3108. O-(pantetheine 4'-phosphoryl)serine is present on residues Ser999, Ser2040, and Ser3069.

This sequence belongs to the ATP-dependent AMP-binding enzyme family. Requires pantetheine 4'-phosphate as cofactor.

It participates in antibiotic biosynthesis; surfactin biosynthesis. This protein is a multifunctional enzyme able to activate and polymerize the amino acids Leu, Glu, Asp and Val. Activation sites for these AA consist of individual domains. This is Surfactin synthase subunit 2 (srfAB) from Bacillus subtilis (strain 168).